The primary structure comprises 473 residues: Fumarate hydratase class II (473 aa).

Residues 104 to 106 (SGT), 128 to 131 (HPND), 138 to 140 (SSN), and Thr186 each bind substrate. His187 acts as the Proton donor/acceptor in catalysis. Residue Ser318 is part of the active site. Residues Ser319 and 324-326 (KVN) each bind substrate.

It belongs to the class-II fumarase/aspartase family. Fumarase subfamily. Homotetramer.

It localises to the cytoplasm. The catalysed reaction is (S)-malate = fumarate + H2O. The protein operates within carbohydrate metabolism; tricarboxylic acid cycle; (S)-malate from fumarate: step 1/1. In terms of biological role, involved in the TCA cycle. Catalyzes the stereospecific interconversion of fumarate to L-malate. The chain is Fumarate hydratase class II from Corynebacterium efficiens (strain DSM 44549 / YS-314 / AJ 12310 / JCM 11189 / NBRC 100395).